The chain runs to 447 residues: Phosphoglucosamine mutase (447 aa).

The Phosphoserine intermediate role is filled by Ser103. Residues Ser103, Asp242, Asp244, and Asp246 each contribute to the Mg(2+) site. At Ser103 the chain carries Phosphoserine.

This sequence belongs to the phosphohexose mutase family. The cofactor is Mg(2+). Post-translationally, activated by phosphorylation.

The enzyme catalyses alpha-D-glucosamine 1-phosphate = D-glucosamine 6-phosphate. Catalyzes the conversion of glucosamine-6-phosphate to glucosamine-1-phosphate. In Jannaschia sp. (strain CCS1), this protein is Phosphoglucosamine mutase.